Consider the following 214-residue polypeptide: 3-demethoxyubiquinol 3-hydroxylase (214 aa).

Residues glutamate 63, glutamate 93, histidine 96, glutamate 145, glutamate 177, and histidine 180 each coordinate Fe cation.

This sequence belongs to the COQ7 family. Fe cation is required as a cofactor.

It is found in the cell membrane. It catalyses the reaction a 5-methoxy-2-methyl-3-(all-trans-polyprenyl)benzene-1,4-diol + AH2 + O2 = a 3-demethylubiquinol + A + H2O. Its pathway is cofactor biosynthesis; ubiquinone biosynthesis. Functionally, catalyzes the hydroxylation of 2-nonaprenyl-3-methyl-6-methoxy-1,4-benzoquinol during ubiquinone biosynthesis. This is 3-demethoxyubiquinol 3-hydroxylase from Psychrobacter arcticus (strain DSM 17307 / VKM B-2377 / 273-4).